We begin with the raw amino-acid sequence, 527 residues long: Peptide chain release factor 3 (527 aa).

The 270-residue stretch at 9–278 (NKRRTFAIIS…GLTQWAPKPQ (270 aa)) folds into the tr-type G domain. Residues 18–25 (SHPDAGKT), 86–90 (DTPGH), and 140–143 (NKLD) contribute to the GTP site.

It belongs to the TRAFAC class translation factor GTPase superfamily. Classic translation factor GTPase family. PrfC subfamily.

The protein resides in the cytoplasm. In terms of biological role, increases the formation of ribosomal termination complexes and stimulates activities of RF-1 and RF-2. It binds guanine nucleotides and has strong preference for UGA stop codons. It may interact directly with the ribosome. The stimulation of RF-1 and RF-2 is significantly reduced by GTP and GDP, but not by GMP. The chain is Peptide chain release factor 3 from Haemophilus influenzae (strain PittEE).